The sequence spans 149 residues: 3-hydroxyacyl-[acyl-carrier-protein] dehydratase FabZ (149 aa).

Histidine 49 is a catalytic residue.

It belongs to the thioester dehydratase family. FabZ subfamily.

It is found in the cytoplasm. The enzyme catalyses a (3R)-hydroxyacyl-[ACP] = a (2E)-enoyl-[ACP] + H2O. Its function is as follows. Involved in unsaturated fatty acids biosynthesis. Catalyzes the dehydration of short chain beta-hydroxyacyl-ACPs and long chain saturated and unsaturated beta-hydroxyacyl-ACPs. The sequence is that of 3-hydroxyacyl-[acyl-carrier-protein] dehydratase FabZ from Sulfurovum sp. (strain NBC37-1).